Consider the following 148-residue polypeptide: Large ribosomal subunit protein bL9 (148 aa).

This sequence belongs to the bacterial ribosomal protein bL9 family.

Functionally, binds to the 23S rRNA. The protein is Large ribosomal subunit protein bL9 of Desulfatibacillum aliphaticivorans.